Here is a 177-residue protein sequence, read N- to C-terminus: Large ribosomal subunit protein uL6 (177 aa).

It belongs to the universal ribosomal protein uL6 family. Part of the 50S ribosomal subunit.

This protein binds to the 23S rRNA, and is important in its secondary structure. It is located near the subunit interface in the base of the L7/L12 stalk, and near the tRNA binding site of the peptidyltransferase center. This chain is Large ribosomal subunit protein uL6, found in Bradyrhizobium diazoefficiens (strain JCM 10833 / BCRC 13528 / IAM 13628 / NBRC 14792 / USDA 110).